Consider the following 172-residue polypeptide: Large ribosomal subunit protein uL10 (172 aa).

Belongs to the universal ribosomal protein uL10 family. Part of the ribosomal stalk of the 50S ribosomal subunit. The N-terminus interacts with L11 and the large rRNA to form the base of the stalk. The C-terminus forms an elongated spine to which L12 dimers bind in a sequential fashion forming a multimeric L10(L12)X complex.

In terms of biological role, forms part of the ribosomal stalk, playing a central role in the interaction of the ribosome with GTP-bound translation factors. This Rhodospirillum rubrum (strain ATCC 11170 / ATH 1.1.1 / DSM 467 / LMG 4362 / NCIMB 8255 / S1) protein is Large ribosomal subunit protein uL10.